A 175-amino-acid polypeptide reads, in one-letter code: Ribosome maturation factor RimM (175 aa).

Positions 96–175 (EGDYYWHDLI…TITVDWDAGF (80 aa)) constitute a PRC barrel domain.

The protein belongs to the RimM family. In terms of assembly, binds ribosomal protein uS19.

It is found in the cytoplasm. In terms of biological role, an accessory protein needed during the final step in the assembly of 30S ribosomal subunit, possibly for assembly of the head region. Essential for efficient processing of 16S rRNA. May be needed both before and after RbfA during the maturation of 16S rRNA. It has affinity for free ribosomal 30S subunits but not for 70S ribosomes. This Actinobacillus pleuropneumoniae serotype 5b (strain L20) protein is Ribosome maturation factor RimM.